Reading from the N-terminus, the 114-residue chain is Replication initiation control protein YabA (114 aa).

His79, Cys81, Cys95, and Cys98 together coordinate Zn(2+).

This sequence belongs to the YabA family. Homotetramer. Interacts with both DnaA and DnaN, acting as a bridge between these two proteins. The cofactor is Zn(2+).

Its subcellular location is the cytoplasm. It is found in the nucleoid. Its function is as follows. Involved in control of chromosome replication initiation. Inhibits the cooperative binding of DnaA to the oriC region, thus negatively regulating initiation of chromosome replication. Inhibits the ability of DnaA-ATP to form a helix on DNA; does not disassemble preformed DnaA-DNA helices. Decreases the residence time of DnaA on the chromosome at its binding sites (oriC, replication forks and promoter-binding sites). Tethers DnaA to the replication machinery via the DNA polymerase beta sliding clamp subunit (dnaN). Associates with oriC and other DnaA targets on the chromosome in a DnaA-dependent manner. The chain is Replication initiation control protein YabA from Lactobacillus johnsonii (strain CNCM I-12250 / La1 / NCC 533).